A 146-amino-acid chain; its full sequence is Small ribosomal subunit protein uS9x (146 aa).

It belongs to the universal ribosomal protein uS9 family.

Its subcellular location is the cytoplasm. This Arabidopsis thaliana (Mouse-ear cress) protein is Small ribosomal subunit protein uS9x (RPS16C).